The following is a 107-amino-acid chain: Integration host factor subunit alpha (107 aa).

This sequence belongs to the bacterial histone-like protein family. In terms of assembly, heterodimer of an alpha and a beta chain.

Functionally, this protein is one of the two subunits of integration host factor, a specific DNA-binding protein that functions in genetic recombination as well as in transcriptional and translational control. This is Integration host factor subunit alpha from Bartonella tribocorum (strain CIP 105476 / IBS 506).